A 343-amino-acid polypeptide reads, in one-letter code: uncharacterized protein (343 aa).

Position 33–40 (glycine 33–serine 40) interacts with ATP.

Belongs to the archaeal ATPase family.

This is an uncharacterized protein from Methanocaldococcus jannaschii (strain ATCC 43067 / DSM 2661 / JAL-1 / JCM 10045 / NBRC 100440) (Methanococcus jannaschii).